The primary structure comprises 287 residues: Bifunctional protein FolD (287 aa).

NADP(+) contacts are provided by residues 160–162, S189, and T230; that span reads GRS.

It belongs to the tetrahydrofolate dehydrogenase/cyclohydrolase family. Homodimer.

The catalysed reaction is (6R)-5,10-methylene-5,6,7,8-tetrahydrofolate + NADP(+) = (6R)-5,10-methenyltetrahydrofolate + NADPH. It carries out the reaction (6R)-5,10-methenyltetrahydrofolate + H2O = (6R)-10-formyltetrahydrofolate + H(+). It functions in the pathway one-carbon metabolism; tetrahydrofolate interconversion. Functionally, catalyzes the oxidation of 5,10-methylenetetrahydrofolate to 5,10-methenyltetrahydrofolate and then the hydrolysis of 5,10-methenyltetrahydrofolate to 10-formyltetrahydrofolate. This Chlamydia trachomatis serovar D (strain ATCC VR-885 / DSM 19411 / UW-3/Cx) protein is Bifunctional protein FolD.